Reading from the N-terminus, the 782-residue chain is General transcription and DNA repair factor IIH helicase/translocase subunit XPB (782 aa).

A compositionally biased stretch (basic and acidic residues) spans 1-11 (MGKRDRADRDK). 2 disordered regions span residues 1 to 51 (MGKR…ESGT) and 218 to 241 (SAIS…PQGK). The short motif at 6 to 18 (RADRDKKKSRKRH) is the Nuclear localization signal element. Acidic residues predominate over residues 21-30 (DEEDDEEDAP). Polar residues predominate over residues 218-236 (SAISKTAESSGGPSTSRVT). The Helicase ATP-binding domain occupies 327–488 (MFGNGRARSG…DLNFLIGPKL (162 aa)). Residue 340-347 (LPCGAGKS) coordinates ATP. Positions 441-444 (DEVH) match the DEVH box motif. A Helicase C-terminal domain is found at 542–702 (RACQFLIKFH…LAGMEEEDLA (161 aa)). Ser-686 bears the Phosphoserine mark. Position 751 is a phosphoserine; by CK2 (Ser-751).

Belongs to the helicase family. RAD25/XPB subfamily. In terms of assembly, component of the 7-subunit TFIIH core complex composed of XPB/ERCC3, XPD/ERCC2, GTF2H1, GTF2H2, GTF2H3, GTF2H4 and GTF2H5, which is active in NER. The core complex associates with the 3-subunit CDK-activating kinase (CAK) module composed of CCNH/cyclin H, CDK7 and MNAT1 to form the 10-subunit holoenzyme (holo-TFIIH) active in transcription. Interacts with PUF60. Interacts with ATF7IP. Interacts with KAT2A; leading to KAT2A recruitment to promoters and acetylation of histones. Part of TBP-based Pol II pre-initiation complex (PIC), in which Pol II core assembles with general transcription factors and other specific initiation factors including GTF2E1, GTF2E2, GTF2F1, GTF2F2, TCEA1, ERCC2, ERCC3, GTF2H2, GTF2H3, GTF2H4, GTF2H5, GTF2A1, GTF2A2, GTF2B and TBP; this large multi-subunit PIC complex mediates DNA unwinding and targets Pol II core to the transcription start site where the first phosphodiester bond forms. Post-translationally, phosphorylation on Ser-751 by CK2 controls the 5'-excision activity of ERCC1-XPF endonuclease; phosphorylated protein inhibits the excision activity and thus NER. Dephosphorylation reactivates the 5'-excision step. Phosphorylation has no effect on transcription or the 3'-5' helicase activity.

The protein localises to the nucleus. It carries out the reaction Couples ATP hydrolysis with the unwinding of duplex DNA by translocating in the 3'-5' direction.. The enzyme catalyses ATP + H2O = ADP + phosphate + H(+). With respect to regulation, phosphorylation on Ser-751 by CK2 controls the 5'-excision activity of ERCC1-XPF endonuclease; phosphorylated protein inhibits the excision activity and thus NER. ATPase activity is stimulated by TFIIH subunit p52 (GTF2H4). DNA translocase activity by this subunit in TFIIH is stimulated by XPA, ERCC5/XPG and XFP plus ERCC1. In terms of biological role, ATP-dependent 3'-5' DNA helicase/translocase; binds dsDNA rather than ssDNA, unzipping it in a translocase rather than classical helicase activity. Component of the general transcription and DNA repair factor IIH (TFIIH) core complex. When complexed to CDK-activating kinase (CAK), involved in RNA transcription by RNA polymerase II. The ATPase activity of XPB/ERCC3, but not its helicase activity, is required for DNA opening; it may wrap around the damaged DNA wedging it open, causing localized melting and twisting that allows XPD/ERCC2 helicase to anchor. The ATP-dependent helicase activity of XPB/ERCC3 may be required for promoter escape. Also involved in transcription-coupled nucleotide excision repair (NER) of damaged DNA. In NER, TFIIH acts by opening DNA around the lesion to allow the excision of the damaged oligonucleotide and its replacement by a new DNA fragment. The structure of the TFIIH transcription complex differs from the NER-TFIIH complex; large movements by XPD/ERCC2 and XPB/ERCC3 are stabilized by XPA. The chain is General transcription and DNA repair factor IIH helicase/translocase subunit XPB (ERCC3) from Pongo abelii (Sumatran orangutan).